A 391-amino-acid chain; its full sequence is GDSL esterase/lipase 22 (391 aa).

The signal sequence occupies residues 1 to 29 (MMANNCNLVSVLCVILVLTLFHNPITVAG). The Nucleophile role is filled by serine 43. N-linked (GlcNAc...) asparagine glycosylation is found at asparagine 105, asparagine 165, and asparagine 288. Residues aspartate 322 and histidine 325 contribute to the active site. The interval 372-391 (PATVHASDSSSSTSRGYEYY) is disordered.

Belongs to the 'GDSL' lipolytic enzyme family. In terms of assembly, component of the PYK10 complex, at least composed of PYK10/BGLU23, BGLU21, BGLU22, JAL22, JAL23, PBP1/JAL30, PBP2/JAL31, JAL32, JAL33, JAL34, JAL35, GLL22 and GLL23.

Its subcellular location is the secreted. The chain is GDSL esterase/lipase 22 (GLL22) from Arabidopsis thaliana (Mouse-ear cress).